The following is a 222-amino-acid chain: Flagellar L-ring protein (222 aa).

Positions 1-18 (MRRPGAAALAAAALALAG) are cleaved as a signal peptide. The N-palmitoyl cysteine moiety is linked to residue C19. C19 is lipidated: S-diacylglycerol cysteine.

It belongs to the FlgH family. The basal body constitutes a major portion of the flagellar organelle and consists of four rings (L,P,S, and M) mounted on a central rod.

The protein resides in the cell outer membrane. It localises to the bacterial flagellum basal body. In terms of biological role, assembles around the rod to form the L-ring and probably protects the motor/basal body from shearing forces during rotation. The polypeptide is Flagellar L-ring protein (Burkholderia mallei (strain ATCC 23344)).